We begin with the raw amino-acid sequence, 1070 residues long: Carbamoyl phosphate synthase large chain (1070 aa).

The tract at residues 1–401 (MPKRDDIKTI…ALLKAVRSLE (401 aa)) is carboxyphosphate synthetic domain. Arg129, Arg169, Gly175, Gly176, Lys208, Ile210, Glu215, Gly241, Ile242, His243, Gln284, and Glu298 together coordinate ATP. The region spanning 133–327 (RDLMNELGEP…IAKLAAKIAV (195 aa)) is the ATP-grasp 1 domain. 3 residues coordinate Mg(2+): Gln284, Glu298, and Asn300. Mn(2+) is bound by residues Gln284, Glu298, and Asn300. The oligomerization domain stretch occupies residues 402-546 (IGADHLLLEE…YSTYEEENES (145 aa)). The tract at residues 547 to 929 (TRSAKESVIV…ALYKGFVASG (383 aa)) is carbamoyl phosphate synthetic domain. The region spanning 671–861 (EKALEILQIP…MANVATRVIL (191 aa)) is the ATP-grasp 2 domain. Positions 707, 746, 748, 752, 777, 778, 779, 780, 820, and 832 each coordinate ATP. Residues Gln820, Glu832, and Asn834 each coordinate Mg(2+). Mn(2+) contacts are provided by Gln820, Glu832, and Asn834. An MGS-like domain is found at 930–1070 (TTMHDYGTVL…SEVKQPKARV (141 aa)). The allosteric domain stretch occupies residues 930-1070 (TTMHDYGTVL…SEVKQPKARV (141 aa)).

The protein belongs to the CarB family. In terms of assembly, composed of two chains; the small (or glutamine) chain promotes the hydrolysis of glutamine to ammonia, which is used by the large (or ammonia) chain to synthesize carbamoyl phosphate. Tetramer of heterodimers (alpha,beta)4. Requires Mg(2+) as cofactor. Mn(2+) serves as cofactor.

The catalysed reaction is hydrogencarbonate + L-glutamine + 2 ATP + H2O = carbamoyl phosphate + L-glutamate + 2 ADP + phosphate + 2 H(+). It carries out the reaction hydrogencarbonate + NH4(+) + 2 ATP = carbamoyl phosphate + 2 ADP + phosphate + 2 H(+). Its pathway is amino-acid biosynthesis; L-arginine biosynthesis; carbamoyl phosphate from bicarbonate: step 1/1. It participates in pyrimidine metabolism; UMP biosynthesis via de novo pathway; (S)-dihydroorotate from bicarbonate: step 1/3. Its function is as follows. Large subunit of the glutamine-dependent carbamoyl phosphate synthetase (CPSase). CPSase catalyzes the formation of carbamoyl phosphate from the ammonia moiety of glutamine, carbonate, and phosphate donated by ATP, constituting the first step of 2 biosynthetic pathways, one leading to arginine and/or urea and the other to pyrimidine nucleotides. The large subunit (synthetase) binds the substrates ammonia (free or transferred from glutamine from the small subunit), hydrogencarbonate and ATP and carries out an ATP-coupled ligase reaction, activating hydrogencarbonate by forming carboxy phosphate which reacts with ammonia to form carbamoyl phosphate. The sequence is that of Carbamoyl phosphate synthase large chain from Listeria monocytogenes serotype 4b (strain F2365).